The following is a 553-amino-acid chain: Arginine--tRNA ligase (553 aa).

Residues 130-140 (ANPTGDLHIGH) carry the 'HIGH' region motif.

It belongs to the class-I aminoacyl-tRNA synthetase family. Monomer.

It localises to the cytoplasm. The catalysed reaction is tRNA(Arg) + L-arginine + ATP = L-arginyl-tRNA(Arg) + AMP + diphosphate. This Staphylococcus epidermidis (strain ATCC 35984 / DSM 28319 / BCRC 17069 / CCUG 31568 / BM 3577 / RP62A) protein is Arginine--tRNA ligase.